The primary structure comprises 276 residues: Octanoyltransferase LipM (276 aa).

In terms of domain architecture, BPL/LPL catalytic spans G31 to L246. The active-site Acyl-thioester intermediate is the C148.

This sequence belongs to the octanoyltransferase LipM family. Monomer.

It catalyses the reaction octanoyl-[ACP] + L-lysyl-[protein] = N(6)-octanoyl-L-lysyl-[protein] + holo-[ACP] + H(+). Its pathway is protein modification; protein lipoylation via endogenous pathway; protein N(6)-(lipoyl)lysine from octanoyl-[acyl-carrier-protein]. Its function is as follows. Catalyzes the transfer of endogenously produced octanoic acid from octanoyl-acyl-carrier-protein onto the lipoyl domain of GcvH, an intermediate carrier during protein lipoylation. The chain is Octanoyltransferase LipM from Lysinibacillus sphaericus (strain C3-41).